An 822-amino-acid chain; its full sequence is Myosin-D (822 aa).

The 676-residue stretch at 95 to 770 folds into the Myosin motor domain; that stretch reads LTYGDIGGLP…AAKMLVRLQR (676 aa). Residue 189-196 participates in ATP binding; the sequence is GESGAGKT. Positions 660 to 670 are actin-binding; sequence SHFIRCIKPND. The segment at 772 to 822 is tail; sequence ALSAWEPLVGVFEGMTVLKRAKQLSTGRAVPATRICANVRRKLVQAGIKVC.

The protein belongs to the TRAFAC class myosin-kinesin ATPase superfamily. Myosin family.

It is found in the cell membrane. The protein localises to the cytoplasm. Functionally, myosins are actin-based motor molecules with ATPase activity. Unconventional myosins serve in intracellular movements. Their highly divergent tails are presumed to bind to membranous compartments, which would be moved relative to actin filaments. The sequence is that of Myosin-D from Toxoplasma gondii.